Here is a 596-residue protein sequence, read N- to C-terminus: (E)-beta-ocimene synthase, chloroplastic (596 aa).

A chloroplast-targeting transit peptide spans 1-35 (MAITHYQMASFQSSFHFCMLRKTLRQKSSLHFAKR). (2E)-geranyl diphosphate is bound by residues Arg-307, Asp-344, Asp-348, Arg-485, and Asn-488. Residues Asp-344 and Asp-348 each coordinate Mg(2+). The short motif at 344–348 (DDIYD) is the DDXXD motif element. Asn-488, Ala-492, and Glu-496 together coordinate Mg(2+).

It belongs to the terpene synthase family. Tpsb subfamily. Mg(2+) is required as a cofactor. The cofactor is Mn(2+). Highly expressed in leaves, stems and disk florets. Detected in roots.

The protein resides in the plastid. It is found in the chloroplast. The catalysed reaction is (2E)-geranyl diphosphate = (E)-beta-ocimene + diphosphate. It functions in the pathway secondary metabolite biosynthesis; terpenoid biosynthesis. Its function is as follows. Monoterpene synthase involved in the biosynthesis of (E)-beta-ocimene as the major product and trace amounts of (Z)-beta-ocimene. Can only accept geranyl diphosphate as substrate. This is (E)-beta-ocimene synthase, chloroplastic from Matricaria chamomilla var. recutita (German chamomile).